A 258-amino-acid chain; its full sequence is Microtubule-associated protein RP/EB family member 1 (258 aa).

The region spanning 14–116 is the Calponin-homology (CH) domain; sequence NLSRHDMLAW…FVQWFKKFFD (103 aa). Residues 175-245 form the EB1 C-terminal domain; it reads KKAAGDDESA…LYATDEGFVI (71 aa).

The protein belongs to the MAPRE family.

The protein localises to the cytoplasm. The protein resides in the cytoskeleton. Its subcellular location is the microtubule organizing center. It localises to the centrosome. It is found in the golgi apparatus. The protein localises to the spindle. The protein resides in the spindle pole. Functionally, plus-end tracking protein (+TIP) that binds to the plus-end of microtubules and regulates the dynamics of the microtubule cytoskeleton. Promotes cytoplasmic microtubule nucleation and elongation. Involved in mitotic spindle positioning by stabilizing microtubules and promoting dynamic connection between astral microtubules and the cortex during mitotic chromosome segregation. The polypeptide is Microtubule-associated protein RP/EB family member 1 (MAPRE1) (Gallus gallus (Chicken)).